We begin with the raw amino-acid sequence, 300 residues long: Porphobilinogen deaminase (300 aa).

Residue C239 is modified to S-(dipyrrolylmethanemethyl)cysteine.

Belongs to the HMBS family. Monomer. Requires dipyrromethane as cofactor.

The catalysed reaction is 4 porphobilinogen + H2O = hydroxymethylbilane + 4 NH4(+). The protein operates within porphyrin-containing compound metabolism; protoporphyrin-IX biosynthesis; coproporphyrinogen-III from 5-aminolevulinate: step 2/4. Its function is as follows. Tetrapolymerization of the monopyrrole PBG into the hydroxymethylbilane pre-uroporphyrinogen in several discrete steps. The sequence is that of Porphobilinogen deaminase from Francisella philomiragia subsp. philomiragia (strain ATCC 25017 / CCUG 19701 / FSC 153 / O#319-036).